Here is a 500-residue protein sequence, read N- to C-terminus: L-arabinose isomerase (500 aa).

Residues E306, E333, H349, and H448 each contribute to the Mn(2+) site.

This sequence belongs to the arabinose isomerase family. The cofactor is Mn(2+).

It carries out the reaction beta-L-arabinopyranose = L-ribulose. The protein operates within carbohydrate degradation; L-arabinose degradation via L-ribulose; D-xylulose 5-phosphate from L-arabinose (bacterial route): step 1/3. Its function is as follows. Catalyzes the conversion of L-arabinose to L-ribulose. The polypeptide is L-arabinose isomerase (Shewanella baltica (strain OS223)).